The primary structure comprises 252 residues: Protein IRON-RELATED TRANSCRIPTION FACTOR 3 (252 aa).

Positions 36–49 (PRKVHKSEREKLKR) are basic motif. A bHLH domain is found at 36-86 (PRKVHKSEREKLKRGHLNDLFGELGNMLEADRQSNGKACILTDTTRILRDL). The tract at residues 50-86 (GHLNDLFGELGNMLEADRQSNGKACILTDTTRILRDL) is helix-loop-helix motif. A coiled-coil region spans residues 76 to 131 (LTDTTRILRDLLSQVKSLRQENSTLQNESNYVTMERNELQDENGALRSEISDLQNE). A disordered region spans residues 135–252 (RATGSPGWGH…GLPRMEDEQM (118 aa)). The span at 162–176 (PSQQPMQPSPMTTST) shows a compositional bias: low complexity. Residues 208-219 (PAEDPEPSEDQE) show a composition bias toward acidic residues.

This sequence belongs to the bHLH protein family.

It localises to the nucleus. In terms of biological role, transcription factor that acts as a negative regulator of the iron deficiency response. Suppresses the induction of iron deficiency responsive genes, such as NAS1, NAS2, IRO2, IRT1, YSL15, and NRAMP1. This chain is Protein IRON-RELATED TRANSCRIPTION FACTOR 3, found in Oryza sativa subsp. japonica (Rice).